Here is a 280-residue protein sequence, read N- to C-terminus: Undecaprenyl-diphosphatase (280 aa).

Transmembrane regions (helical) follow at residues 1–21 (MTLL…PFPV), 45–65 (FLPF…GVFW), 90–110 (IFGL…LLEH), 115–135 (VFGT…LLMV), 151–171 (IATL…LALL), 226–246 (IMVQ…ICSL), and 260–280 (LTPF…VILL).

It belongs to the UppP family.

Its subcellular location is the cell inner membrane. The enzyme catalyses di-trans,octa-cis-undecaprenyl diphosphate + H2O = di-trans,octa-cis-undecaprenyl phosphate + phosphate + H(+). Functionally, catalyzes the dephosphorylation of undecaprenyl diphosphate (UPP). Confers resistance to bacitracin. In Gluconobacter oxydans (strain 621H) (Gluconobacter suboxydans), this protein is Undecaprenyl-diphosphatase.